Here is a 148-residue protein sequence, read N- to C-terminus: D-aminoacyl-tRNA deacylase (148 aa).

The Gly-cisPro motif, important for rejection of L-amino acids motif lies at 137-138 (GP).

It belongs to the DTD family. Homodimer.

The protein localises to the cytoplasm. It carries out the reaction glycyl-tRNA(Ala) + H2O = tRNA(Ala) + glycine + H(+). The enzyme catalyses a D-aminoacyl-tRNA + H2O = a tRNA + a D-alpha-amino acid + H(+). An aminoacyl-tRNA editing enzyme that deacylates mischarged D-aminoacyl-tRNAs. Also deacylates mischarged glycyl-tRNA(Ala), protecting cells against glycine mischarging by AlaRS. Acts via tRNA-based rather than protein-based catalysis; rejects L-amino acids rather than detecting D-amino acids in the active site. By recycling D-aminoacyl-tRNA to D-amino acids and free tRNA molecules, this enzyme counteracts the toxicity associated with the formation of D-aminoacyl-tRNA entities in vivo and helps enforce protein L-homochirality. The chain is D-aminoacyl-tRNA deacylase from Lactiplantibacillus plantarum (strain ATCC BAA-793 / NCIMB 8826 / WCFS1) (Lactobacillus plantarum).